Consider the following 217-residue polypeptide: Probable nicotinate-nucleotide adenylyltransferase (217 aa).

This sequence belongs to the NadD family.

The enzyme catalyses nicotinate beta-D-ribonucleotide + ATP + H(+) = deamido-NAD(+) + diphosphate. It functions in the pathway cofactor biosynthesis; NAD(+) biosynthesis; deamido-NAD(+) from nicotinate D-ribonucleotide: step 1/1. In terms of biological role, catalyzes the reversible adenylation of nicotinate mononucleotide (NaMN) to nicotinic acid adenine dinucleotide (NaAD). This is Probable nicotinate-nucleotide adenylyltransferase from Moorella thermoacetica (strain ATCC 39073 / JCM 9320).